The sequence spans 182 residues: MPGRSRRRRELDRTEKREFVASLAAVFAETSMVVVTRNDGLTVADATILRQRVRAAGATYKVAKNRLANLALAGTRFEGISPLLKGPTALSWSADPVAVAKVLVEFAKTNEKLVLLGGALGTQTLNVDGVKALAELPSLDTLRAQLVGLISTPATRIAGVLQAPAGQLARVFGAYAKKDEAA.

This sequence belongs to the universal ribosomal protein uL10 family. In terms of assembly, part of the ribosomal stalk of the 50S ribosomal subunit. The N-terminus interacts with L11 and the large rRNA to form the base of the stalk. The C-terminus forms an elongated spine to which L12 dimers bind in a sequential fashion forming a multimeric L10(L12)X complex.

In terms of biological role, forms part of the ribosomal stalk, playing a central role in the interaction of the ribosome with GTP-bound translation factors. The protein is Large ribosomal subunit protein uL10 of Gluconacetobacter diazotrophicus (strain ATCC 49037 / DSM 5601 / CCUG 37298 / CIP 103539 / LMG 7603 / PAl5).